The sequence spans 170 residues: Ubiquitin-conjugating enzyme E2 G1 (170 aa).

An N-acetylmethionine modification is found at Met1. Position 2 is an N-acetylthreonine; in Ubiquitin-conjugating enzyme E2 G1, N-terminally processed (Thr2). In terms of domain architecture, UBC core spans 5-166; that stretch reads QSALLLRRQL…VARCVRKSQE (162 aa). The active-site Glycyl thioester intermediate is Cys90.

This sequence belongs to the ubiquitin-conjugating enzyme family. In terms of processing, autoubiquitinated.

The catalysed reaction is S-ubiquitinyl-[E1 ubiquitin-activating enzyme]-L-cysteine + [E2 ubiquitin-conjugating enzyme]-L-cysteine = [E1 ubiquitin-activating enzyme]-L-cysteine + S-ubiquitinyl-[E2 ubiquitin-conjugating enzyme]-L-cysteine.. It functions in the pathway protein modification; protein ubiquitination. Functionally, accepts ubiquitin from the E1 complex and catalyzes its covalent attachment to other proteins. In vitro catalyzes 'Lys-48'-, as well as 'Lys-63'-linked polyubiquitination. May be involved in degradation of muscle-specific proteins. Mediates polyubiquitination of CYP3A4. The polypeptide is Ubiquitin-conjugating enzyme E2 G1 (UBE2G1) (Macaca fascicularis (Crab-eating macaque)).